The sequence spans 517 residues: Amidophosphoribosyltransferase (517 aa).

The residue at position 1 (M1) is an N-acetylmethionine. The propeptide occupies 1-11; it reads MELEESGIREE. C12 acts as the Nucleophile in catalysis. The Glutamine amidotransferase type-2 domain maps to 12–261; the sequence is CGVFGCIASG…PGEIVEISRH (250 aa). C280 contacts [4Fe-4S] cluster. Mg(2+) contacts are provided by S327, D389, and D390. Residues C426, C503, and C506 each coordinate [4Fe-4S] cluster.

It in the C-terminal section; belongs to the purine/pyrimidine phosphoribosyltransferase family. Homotetramer. Requires Mg(2+) as cofactor. [4Fe-4S] cluster serves as cofactor. In terms of tissue distribution, expressed at a high level in brain, heart, liver and stomach.

It carries out the reaction 5-phospho-beta-D-ribosylamine + L-glutamate + diphosphate = 5-phospho-alpha-D-ribose 1-diphosphate + L-glutamine + H2O. It functions in the pathway purine metabolism; IMP biosynthesis via de novo pathway; N(1)-(5-phospho-D-ribosyl)glycinamide from 5-phospho-alpha-D-ribose 1-diphosphate: step 1/2. Activated by the substrate 5-phospho-alpha-D-ribosyl-1-pyrophosphate and inhibited by the purine ribonucleotides, the end products of purine biosynthesis. In terms of biological role, catalyzes the formation of phosphoribosylamine from phosphoribosylpyrophosphate (PRPP) and glutamine. This chain is Amidophosphoribosyltransferase (Ppat), found in Rattus norvegicus (Rat).